The sequence spans 1220 residues: ATP-dependent helicase/nuclease subunit A (1220 aa).

In terms of domain architecture, UvrD-like helicase ATP-binding spans Val9–Arg473. Ala30–Thr37 provides a ligand contact to ATP. In terms of domain architecture, UvrD-like helicase C-terminal spans Pro474–Gly782.

Belongs to the helicase family. AddA subfamily. As to quaternary structure, heterodimer of AddA and AddB/RexB. Mg(2+) serves as cofactor.

The enzyme catalyses Couples ATP hydrolysis with the unwinding of duplex DNA by translocating in the 3'-5' direction.. It catalyses the reaction ATP + H2O = ADP + phosphate + H(+). Its function is as follows. The heterodimer acts as both an ATP-dependent DNA helicase and an ATP-dependent, dual-direction single-stranded exonuclease. Recognizes the chi site generating a DNA molecule suitable for the initiation of homologous recombination. The AddA nuclease domain is required for chi fragment generation; this subunit has the helicase and 3' -&gt; 5' nuclease activities. The protein is ATP-dependent helicase/nuclease subunit A of Staphylococcus carnosus (strain TM300).